A 924-amino-acid polypeptide reads, in one-letter code: Periplasmic nitrate reductase (924 aa).

Residues 1–30 (MNRRDFIKNTAIASAASVAGLSVPSSMLGA) constitute a signal peptide (tat-type signal). The 4Fe-4S Mo/W bis-MGD-type domain occupies 35-91 (WKWDKAVCRFCGTGCGIMIARKDGKIVATKGDPAAPVNRGLNCIKGYFNAKIMYGED). Positions 42, 45, 49, and 77 each coordinate [4Fe-4S] cluster. Mo-bis(molybdopterin guanine dinucleotide) is bound by residues lysine 79, glutamine 147, asparagine 172, cysteine 176, 209-216 (WGANMAEM), methionine 417, glutamine 421, asparagine 527, 552-553 (SD), lysine 575, aspartate 602, and 814-823 (TGRVLEHWHS). Tryptophan 890 is a binding site for substrate. Mo-bis(molybdopterin guanine dinucleotide) contacts are provided by asparagine 898 and lysine 915.

Belongs to the prokaryotic molybdopterin-containing oxidoreductase family. NasA/NapA/NarB subfamily. Component of the periplasmic nitrate reductase NapAB complex composed of NapA and NapB. It depends on [4Fe-4S] cluster as a cofactor. Mo-bis(molybdopterin guanine dinucleotide) serves as cofactor. Post-translationally, predicted to be exported by the Tat system. The position of the signal peptide cleavage has not been experimentally proven.

Its subcellular location is the periplasm. It catalyses the reaction 2 Fe(II)-[cytochrome] + nitrate + 2 H(+) = 2 Fe(III)-[cytochrome] + nitrite + H2O. Catalytic subunit of the periplasmic nitrate reductase complex NapAB. Receives electrons from NapB and catalyzes the reduction of nitrate to nitrite. The polypeptide is Periplasmic nitrate reductase (Campylobacter jejuni subsp. jejuni serotype O:2 (strain ATCC 700819 / NCTC 11168)).